The primary structure comprises 103 residues: Co-chaperonin GroES (103 aa).

The protein belongs to the GroES chaperonin family. Heptamer of 7 subunits arranged in a ring. Interacts with the chaperonin GroEL.

The protein resides in the cytoplasm. In terms of biological role, together with the chaperonin GroEL, plays an essential role in assisting protein folding. The GroEL-GroES system forms a nano-cage that allows encapsulation of the non-native substrate proteins and provides a physical environment optimized to promote and accelerate protein folding. GroES binds to the apical surface of the GroEL ring, thereby capping the opening of the GroEL channel. This Trichodesmium erythraeum (strain IMS101) protein is Co-chaperonin GroES.